The following is a 315-amino-acid chain: Acetyl-coenzyme A carboxylase carboxyl transferase subunit alpha (315 aa).

The 254-residue stretch at 40 to 293 (LQDKSKTLTE…REELSSQLAM (254 aa)) folds into the CoA carboxyltransferase C-terminal domain.

This sequence belongs to the AccA family. Acetyl-CoA carboxylase is a heterohexamer composed of biotin carboxyl carrier protein (AccB), biotin carboxylase (AccC) and two subunits each of ACCase subunit alpha (AccA) and ACCase subunit beta (AccD).

Its subcellular location is the cytoplasm. It catalyses the reaction N(6)-carboxybiotinyl-L-lysyl-[protein] + acetyl-CoA = N(6)-biotinyl-L-lysyl-[protein] + malonyl-CoA. It participates in lipid metabolism; malonyl-CoA biosynthesis; malonyl-CoA from acetyl-CoA: step 1/1. In terms of biological role, component of the acetyl coenzyme A carboxylase (ACC) complex. First, biotin carboxylase catalyzes the carboxylation of biotin on its carrier protein (BCCP) and then the CO(2) group is transferred by the carboxyltransferase to acetyl-CoA to form malonyl-CoA. The sequence is that of Acetyl-coenzyme A carboxylase carboxyl transferase subunit alpha from Pseudomonas syringae pv. tomato (strain ATCC BAA-871 / DC3000).